The following is a 270-amino-acid chain: Diaminopimelate epimerase (270 aa).

3 residues coordinate substrate: N15, Q49, and N66. C75 serves as the catalytic Proton donor. Substrate is bound by residues 76-77, N155, N187, and 204-205; these read GN and ER. C213 acts as the Proton acceptor in catalysis. 214-215 contributes to the substrate binding site; it reads GS.

It belongs to the diaminopimelate epimerase family. Homodimer.

It localises to the cytoplasm. It catalyses the reaction (2S,6S)-2,6-diaminopimelate = meso-2,6-diaminopimelate. It functions in the pathway amino-acid biosynthesis; L-lysine biosynthesis via DAP pathway; DL-2,6-diaminopimelate from LL-2,6-diaminopimelate: step 1/1. In terms of biological role, catalyzes the stereoinversion of LL-2,6-diaminopimelate (L,L-DAP) to meso-diaminopimelate (meso-DAP), a precursor of L-lysine and an essential component of the bacterial peptidoglycan. This is Diaminopimelate epimerase from Rickettsia prowazekii (strain Madrid E).